The sequence spans 1018 residues: Pleckstrin homology domain-containing family M member 2 (1018 aa).

Met1 bears the N-acetylmethionine mark. Positions Met1–Leu289 are interaction with KIF5B. An RUN domain is found at Arg36 to Pro158. Disordered regions lie at residues Ser210–Leu367, Thr407–Leu440, Glu452–Leu520, Glu526–Thr545, and Asp555–Ser583. Low complexity predominate over residues Ser230 to Pro245. The segment covering Glu258–Thr270 has biased composition (polar residues). The span at Val294 to Thr306 shows a compositional bias: basic residues. 2 stretches are compositionally biased toward polar residues: residues His316–Gly325 and Val347–Leu367. Position 423 is a phosphoserine (Ser423). A PH domain is found at Thr770–Ser872.

Interacts with KLC2 (via TPR repeats). Interacts with KIF5B. Interacts with BORCS5. Interacts (via RUN domain) with ARL8B (GTP-bound form); PLEKHM1 and PLEKHM2 compete for interaction with ARL8B. Interacts with ARL8A.

The protein localises to the cytoplasm. It is found in the lysosome membrane. Its function is as follows. Plays a role in lysosomes movement and localization at the cell periphery acting as an effector of ARL8B. Required for ARL8B to exert its effects on lysosome location, recruits kinesin-1 to lysosomes and hence direct their movement toward microtubule plus ends. Binding to ARL8B provides a link from lysosomal membranes to plus-end-directed motility. Critical factor involved in NK cell-mediated cytotoxicity. Drives the polarization of cytolytic granules and microtubule-organizing centers (MTOCs) toward the immune synapse between effector NK lymphocytes and target cells. Required for maintenance of the Golgi apparatus organization. May play a role in membrane tubulation. In Mus musculus (Mouse), this protein is Pleckstrin homology domain-containing family M member 2.